The primary structure comprises 88 residues: Small ribosomal subunit protein uS15c (88 aa).

This sequence belongs to the universal ribosomal protein uS15 family. Part of the 30S ribosomal subunit.

Its subcellular location is the plastid. It localises to the chloroplast. The chain is Small ribosomal subunit protein uS15c (rps15) from Physcomitrium patens (Spreading-leaved earth moss).